We begin with the raw amino-acid sequence, 508 residues long: Maturase K (508 aa).

It belongs to the intron maturase 2 family. MatK subfamily.

It is found in the plastid. The protein localises to the chloroplast. Its function is as follows. Usually encoded in the trnK tRNA gene intron. Probably assists in splicing its own and other chloroplast group II introns. This is Maturase K from Huidobria chilensis (Loasa chilensis).